The following is a 428-amino-acid chain: Putative zinc metalloprotease SAR1238 (428 aa).

His21 is a binding site for Zn(2+). Residue Glu22 is part of the active site. Position 25 (His25) interacts with Zn(2+). A run of 4 helical transmembrane segments spans residues 172–194, 309–331, 352–374, and 401–420; these read FLTLFAGPLFNFILALVLFIGLA, GSTYIFSAVVGMLASIFTGGFSF, IISLIGYTALLSVNLGIMNLIPI, and TTIIAIGAIFMVVIMILVTW. The 84-residue stretch at 186-269 folds into the PDZ domain; it reads ALVLFIGLAY…TKSVELTPKK (84 aa).

The protein belongs to the peptidase M50B family. The cofactor is Zn(2+).

The protein localises to the cell membrane. In Staphylococcus aureus (strain MRSA252), this protein is Putative zinc metalloprotease SAR1238.